The following is a 284-amino-acid chain: Protein SCO1 homolog, mitochondrial (284 aa).

Positions 46 to 73 (RAFSAGPPPPGAGPEPKGGQAGSHRPKP) are disordered. A helical membrane pass occupies residues 81–98 (LALTFAIGGSLLAGMKYF). The Mitochondrial intermembrane segment spans residues 99–284 (KKEKIEKLEK…AHMRSHMKKR (186 aa)). The interval 101–114 (EKIEKLEKQRHRSI) is important for dimerization. 3 residues coordinate Cu cation: Cys152, Cys156, and His243. A disulfide bond links Cys152 and Cys156.

The protein belongs to the SCO1/2 family. In terms of assembly, homodimer. Interacts with COA6. Found in a complex with TMEM177, COX20, COA6, MT-CO2/COX2, COX18 and SCO2. Interacts with TMEM177 in a COX20-dependent manner. Interacts with COX20 in a MT-CO2/COX2- and COX18-dependent manner. Interacts with COX16.

It localises to the mitochondrion. Its subcellular location is the mitochondrion inner membrane. Functionally, copper metallochaperone essential for the maturation of cytochrome c oxidase subunit II (MT-CO2/COX2). Not required for the synthesis of MT-CO2/COX2 but plays a crucial role in stabilizing MT-CO2/COX2 during its subsequent maturation. Involved in transporting copper to the Cu(A) site on MT-CO2/COX2. Plays an important role in the regulation of copper homeostasis by controlling the abundance and cell membrane localization of copper transporter CTR1. The polypeptide is Protein SCO1 homolog, mitochondrial (Sco1) (Mus musculus (Mouse)).